The chain runs to 540 residues: (13S,14R)-13-O-acetyl-1-hydroxy-N-methylcanadine 8-hydroxylase CYP82X1 (540 aa).

Residues 15–35 form a helical membrane-spanning segment; that stretch reads FSIILVTTVSIVLLYSVFFWV. Position 483 (C483) interacts with heme.

Belongs to the cytochrome P450 family. Requires heme as cofactor. As to expression, highly expressed in capsules. Expressed is stems.

It is found in the membrane. It carries out the reaction (13S,14R)-13-O-acetyl-1-hydroxy-N-methylcanadine + reduced [NADPH--hemoprotein reductase] + O2 = (13S,14R)-13-O-acetyl-1,8-dihydroxy-N-methylcanadine + oxidized [NADPH--hemoprotein reductase] + H2O + H(+). Its pathway is alkaloid biosynthesis. Functionally, cytochrome P450 involved in the biosynthesis of the benzylisoquinoline alkaloid noscapine. Converts (13S,14R)-13-O-acetyl-1-hydroxy-N-methylcanadine to (13S,14R)-13-O-acetyl-1,8-dihydroxy-N-methylcanadine. In Papaver somniferum (Opium poppy), this protein is (13S,14R)-13-O-acetyl-1-hydroxy-N-methylcanadine 8-hydroxylase CYP82X1.